The chain runs to 208 residues: Uracil phosphoribosyltransferase (208 aa).

Residues Arg78, Arg103, and Asp130–Ser138 each bind 5-phospho-alpha-D-ribose 1-diphosphate. Uracil contacts are provided by residues Ile193 and Gly198–Ala200. Residue Asp199 participates in 5-phospho-alpha-D-ribose 1-diphosphate binding.

The protein belongs to the UPRTase family. Mg(2+) serves as cofactor.

It catalyses the reaction UMP + diphosphate = 5-phospho-alpha-D-ribose 1-diphosphate + uracil. It functions in the pathway pyrimidine metabolism; UMP biosynthesis via salvage pathway; UMP from uracil: step 1/1. With respect to regulation, allosterically activated by GTP. Catalyzes the conversion of uracil and 5-phospho-alpha-D-ribose 1-diphosphate (PRPP) to UMP and diphosphate. The chain is Uracil phosphoribosyltransferase from Shewanella oneidensis (strain ATCC 700550 / JCM 31522 / CIP 106686 / LMG 19005 / NCIMB 14063 / MR-1).